We begin with the raw amino-acid sequence, 164 residues long: Lipoprotein signal peptidase (164 aa).

The next 4 membrane-spanning stretches (helical) occupy residues 11–31 (YWVLALAAIVLDQWSKWAVLS), 41–61 (VIPSFFDLTLVYNPGAAFSFL), 64–84 (QGGWQKYFFLVLAVAVSAYLV), and 92–112 (FATLGKTGAAMIIGGALGNVI). Active-site residues include D122 and D140. The helical transmembrane segment at 132–152 (FYPAFNIADSFICVGAVLAVL) threads the bilayer.

It belongs to the peptidase A8 family.

Its subcellular location is the cell inner membrane. It catalyses the reaction Release of signal peptides from bacterial membrane prolipoproteins. Hydrolyzes -Xaa-Yaa-Zaa-|-(S,diacylglyceryl)Cys-, in which Xaa is hydrophobic (preferably Leu), and Yaa (Ala or Ser) and Zaa (Gly or Ala) have small, neutral side chains.. Its pathway is protein modification; lipoprotein biosynthesis (signal peptide cleavage). Its function is as follows. This protein specifically catalyzes the removal of signal peptides from prolipoproteins. The protein is Lipoprotein signal peptidase of Neisseria meningitidis serogroup C (strain 053442).